Reading from the N-terminus, the 760-residue chain is Xaa-Pro dipeptidyl-peptidase (760 aa).

Active-site charge relay system residues include Ser-349, Asp-469, and His-499.

This sequence belongs to the peptidase S15 family. As to quaternary structure, homodimer.

The protein localises to the cytoplasm. It catalyses the reaction Hydrolyzes Xaa-Pro-|- bonds to release unblocked, N-terminal dipeptides from substrates including Ala-Pro-|-p-nitroanilide and (sequentially) Tyr-Pro-|-Phe-Pro-|-Gly-Pro-|-Ile.. Its function is as follows. Removes N-terminal dipeptides sequentially from polypeptides having unsubstituted N-termini provided that the penultimate residue is proline. The sequence is that of Xaa-Pro dipeptidyl-peptidase from Streptococcus pyogenes serotype M2 (strain MGAS10270).